Reading from the N-terminus, the 512-residue chain is MAEALASQLNKAKLGDNGAETKWKEQLKLPPKDTRTQTEDVTATKGLEFEDFYIKRELMMGIFEAGFEKPSPIQEETIPVALTGRDILARAKNGTGKTAAFVIPTLERTNPKISKTQALILVPTRELALQTSQVCKTLGKHLGINVMVTTGGTGLQDDIIRLSDTVHIIVGTPGRILDLASKGVADLSECTTFVMDEADKLLSPEFTPVIEQLLSFHPKDRQVMLFSATFPMIVKSFKDKHMRNPYEINLMDELTLRGITQYYAFVEERQKVHCLNTLFSKLQINQSIIFCNSTNRVELLAKKITELGYSCFYSHARMLQQNRNRVFHDFRNGVCRNLVCSDLLTRGIDIQAVNVVINFDFPKNAETYLHRIGRSGRFGHLGLAINLINWDDRYNLYKIEQELGTEIQPIPPSIDKKLYVYDTPETIPRPIANASTERNPPAQLAQSSDNQNHRQAHHISGGHGQQTANRGHSLRGSYRGGRAQGHRGGHPENNRTNPMSSRSNMPTSTTAS.

The interval 1-24 (MAEALASQLNKAKLGDNGAETKWK) is disordered. The Q motif signature appears at 47–75 (LEFEDFYIKRELMMGIFEAGFEKPSPIQE). The 171-residue stretch at 78 to 248 (IPVALTGRDI…DKHMRNPYEI (171 aa)) folds into the Helicase ATP-binding domain. 91–98 (AKNGTGKT) is an ATP binding site. The DEAD box signature appears at 196–199 (DEAD). The 161-residue stretch at 258-418 (GITQYYAFVE…PIPPSIDKKL (161 aa)) folds into the Helicase C-terminal domain. Residues 429–512 (RPIANASTER…SNMPTSTTAS (84 aa)) form a disordered region. Composition is skewed to polar residues over residues 433-450 (NAST…SSDN) and 494-512 (NRTN…TTAS).

Belongs to the DEAD box helicase family. DDX6/DHH1 subfamily.

Its subcellular location is the cytoplasm. The protein resides in the P-body. It catalyses the reaction ATP + H2O = ADP + phosphate + H(+). Functionally, ATP-dependent RNA helicase involved in mRNA turnover, and more specifically in mRNA decapping. Is involved in G1/S DNA-damage checkpoint recovery, probably through the regulation of the translational status of a subset of mRNAs. May also have a role in translation and mRNA nuclear export. The protein is ATP-dependent RNA helicase DHH1 (DHH1) of Coccidioides immitis (strain RS) (Valley fever fungus).